The following is a 192-amino-acid chain: MAQLYFYYSSMNAGKSTHLLQSSYNYQERGLVTAIYTAKIDDRFAKGKVASRLGIDADAFLFDEKINLFKDVDQKHQAEKIDCVLIDEAQFLSTEQVKQLTDIVDLLHIPVLAYGIRTDFLGQTFSGSAALLAWADKLVELKTICHCGRKANFVIRQDANGKAVQNGEQVEVGGNERYEPLCRAHFKQLVWL.

ATP-binding positions include 9 to 16 (SSMNAGKS) and 87 to 90 (DEAQ). The active-site Proton acceptor is Glu-88. 4 residues coordinate Zn(2+): Cys-145, Cys-147, Cys-182, and His-185.

Belongs to the thymidine kinase family. Homotetramer.

The protein localises to the cytoplasm. The enzyme catalyses thymidine + ATP = dTMP + ADP + H(+). This is Thymidine kinase from Colwellia psychrerythraea (strain 34H / ATCC BAA-681) (Vibrio psychroerythus).